A 112-amino-acid chain; its full sequence is Putative pterin-4-alpha-carbinolamine dehydratase (112 aa).

The protein belongs to the pterin-4-alpha-carbinolamine dehydratase family.

The enzyme catalyses (4aS,6R)-4a-hydroxy-L-erythro-5,6,7,8-tetrahydrobiopterin = (6R)-L-erythro-6,7-dihydrobiopterin + H2O. This chain is Putative pterin-4-alpha-carbinolamine dehydratase, found in Shewanella baltica (strain OS155 / ATCC BAA-1091).